A 200-amino-acid chain; its full sequence is Holliday junction resolvase RecU (200 aa).

Thr-85, Asp-87, Glu-100, and Gln-119 together coordinate Mg(2+).

It belongs to the RecU family. Requires Mg(2+) as cofactor.

It localises to the cytoplasm. It catalyses the reaction Endonucleolytic cleavage at a junction such as a reciprocal single-stranded crossover between two homologous DNA duplexes (Holliday junction).. In terms of biological role, endonuclease that resolves Holliday junction intermediates in genetic recombination. Cleaves mobile four-strand junctions by introducing symmetrical nicks in paired strands. Promotes annealing of linear ssDNA with homologous dsDNA. Required for DNA repair, homologous recombination and chromosome segregation. The chain is Holliday junction resolvase RecU from Bacillus cytotoxicus (strain DSM 22905 / CIP 110041 / 391-98 / NVH 391-98).